A 140-amino-acid polypeptide reads, in one-letter code: Organic hydroperoxide resistance protein-like (140 aa).

Belongs to the OsmC/Ohr family.

This Mycoplasma genitalium (strain ATCC 33530 / DSM 19775 / NCTC 10195 / G37) (Mycoplasmoides genitalium) protein is Organic hydroperoxide resistance protein-like.